Here is a 379-residue protein sequence, read N- to C-terminus: MKITVNFLLVALIGVPSVLSDRHITRDKRQAMRDYAKWENNKMSLFFYNLPLEMQAMFRDAINYLENHTCLKFEYNENAETAVRIRKGNGCYSLYGMHAGEVQDLTLDYNCASFGTAVHEIMHALGIAHGQARSDRDDYLIVDSTNSNDGIENTENLVPFDYGSVMLYARDPHSDKRIPIDPEYNFTMGSLRVAFYDMVLLNKFYGCNCDNHPRKLDCKNGGYQNPANCEECLCTDGFNGQLCDQHEGVYVLEAKKEWDASGVRNNYRKGIETNTMPEYTYFALTAPEGSTIEVRITKLSGFFCQHTCDYNGVELKYKTDRRIVSPLVCCDNDNLWNKTRSSTNNPFIIAKYGNNRTPHFEFEYRYIPGNATAAPEENN.

The first 20 residues, 1-20 (MKITVNFLLVALIGVPSVLS), serve as a signal peptide directing secretion. A propeptide spanning residues 21-29 (DRHITRDKR) is cleaved from the precursor. The Peptidase M12A domain occupies 30 to 208 (QAMRDYAKWE…VLLNKFYGCN (179 aa)). Asparagine 67 is a glycosylation site (N-linked (GlcNAc...) asparagine). 4 disulfides stabilise this stretch: cysteine 70/cysteine 207, cysteine 91/cysteine 111, cysteine 209/cysteine 229, and cysteine 234/cysteine 243. Residue histidine 119 coordinates Zn(2+). Residue glutamate 120 is part of the active site. Positions 123 and 129 each coordinate Zn(2+). Asparagine 185 is a glycosylation site (N-linked (GlcNAc...) asparagine). In terms of domain architecture, EGF-like spans 203-244 (KFYGCNCDNHPRKLDCKNGGYQNPANCEECLCTDGFNGQLCD). N-linked (GlcNAc...) asparagine glycans are attached at residues asparagine 337 and asparagine 370.

Requires Zn(2+) as cofactor.

The protein localises to the secreted. In terms of biological role, metalloprotease. This chain is Zinc metalloproteinase nas-20 (nas-20), found in Caenorhabditis elegans.